Reading from the N-terminus, the 199-residue chain is Prolactin-1 (199 aa).

Disulfide bonds link Cys4–Cys11, Cys58–Cys174, and Cys191–Cys199. A glycan (N-linked (GlcNAc...) asparagine) is linked at Asn60.

It belongs to the somatotropin/prolactin family. Glycosylated.

The protein resides in the secreted. This Alligator mississippiensis (American alligator) protein is Prolactin-1.